A 259-amino-acid polypeptide reads, in one-letter code: Factor V activator (259 aa).

An N-terminal signal peptide occupies residues 1–18 (MVLIRVLANLLVLQLSYA). A propeptide spanning residues 19–24 (QKSSEL) is cleaved from the precursor. The region spanning 25-251 (VVGGDECDIN…YTDWIQSIIA (227 aa)) is the Peptidase S1 domain. Cystine bridges form between C31/C165, C52/C68, C100/C258, C144/C212, C176/C191, and C202/C227. Active-site charge relay system residues include H67 and D112. Catalysis depends on S206, which acts as the Charge relay system. A glycan (N-linked (GlcNAc...) asparagine) is linked at N253.

This sequence belongs to the peptidase S1 family. Snake venom subfamily. In terms of assembly, monomer. Post-translationally, N-glycosylated. Contains 4.4% of hexoses, 4.4% of hexosamines and 3.1% of sialic acids. In terms of tissue distribution, expressed by the venom gland.

It localises to the secreted. It catalyses the reaction Fully activates human clotting factor V by a single cleavage at the 1545-Trp-Tyr-Leu-Arg-|-Ser-Asn-Asn-Gly-1552 bond. Cattle, but not rabbit, factor V is cleaved, and no other proteins of the clotting system are attacked. Esterase activity is observed on Bz-Arg-OEt and Tos-Arg-OMe, and amidase activity on Phe-pipecolyl-Arg-NHPhNO2.. With respect to regulation, inhibited by D-Phe-Pro-Arg-chloromethyl ketone (FPRCK) (98%), PMSF (93%), benzamidine (67%), and diisopropylfluorophosphate (DFP). Is not inhibited by BPTI, antithrombin and EDTA. Functionally, venom serine protease that converts factor V (F5) to the active form Va in the presence of calcium ions and phospholipids. It cleaves the Arg(1545)-Ser(1546) linkage in the human factor V molecule. Has hydrolytic activities against BAEE (1.2 U/mg), TAME, and Pro-Phe-Arg-MCA (4.9 U/mg). Shows coagulant activity. The polypeptide is Factor V activator (Macrovipera lebetinus (Levantine viper)).